Consider the following 343-residue polypeptide: MRYSVGVLGATGMVGQKFIQMLAEHPWFKLTSLAASERRVGKKYGEEVDWIVSREVPDIAKDIEMVPMDPKHVDADIVFSALPSDIAREVEPKFAEAGFVVASNASAYRMAEDVPLVIPEVNPEHLGLIEVQKKNRGWDGFIVTNPNCTTIVLVLSLKPLMDLGLRTVRVASMQALSGAGYPGVPSLAITDNVIPFIKGEEDKVEEEPLKLLGKFNGRKIEFADIKVSASCHRVPVIDGHTEAVWVEFDREVSVEEAKAAFESLKPLDLPTSPEKVIIVREEPDRPQPRLDRDAGNGMSITVGRIRKDGERGLKYIVLGHNTVRGAAGASILNAELMIKEKII.

Residue 11–14 participates in NADP(+) binding; the sequence is TGMV. Arg-109 provides a ligand contact to phosphate. Cys-148 functions as the Acyl-thioester intermediate in the catalytic mechanism. Gln-174 is a substrate binding site. 177-178 contributes to the NADP(+) binding site; it reads SG. Glu-200 lines the substrate pocket. Lys-203 is a phosphate binding site. Arg-233 lines the substrate pocket. The active-site Proton acceptor is the His-240. Residue 321–322 coordinates NADP(+); it reads NT.

The protein belongs to the aspartate-semialdehyde dehydrogenase family. As to quaternary structure, homodimer.

It catalyses the reaction L-aspartate 4-semialdehyde + phosphate + NADP(+) = 4-phospho-L-aspartate + NADPH + H(+). It participates in amino-acid biosynthesis; L-lysine biosynthesis via DAP pathway; (S)-tetrahydrodipicolinate from L-aspartate: step 2/4. Its pathway is amino-acid biosynthesis; L-methionine biosynthesis via de novo pathway; L-homoserine from L-aspartate: step 2/3. It functions in the pathway amino-acid biosynthesis; L-threonine biosynthesis; L-threonine from L-aspartate: step 2/5. Functionally, catalyzes the NADPH-dependent formation of L-aspartate-semialdehyde (L-ASA) by the reductive dephosphorylation of L-aspartyl-4-phosphate. This Archaeoglobus fulgidus (strain ATCC 49558 / DSM 4304 / JCM 9628 / NBRC 100126 / VC-16) protein is Aspartate-semialdehyde dehydrogenase.